Reading from the N-terminus, the 250-residue chain is Golgi SNAP receptor complex member 1 (250 aa).

A2 is modified (N-acetylalanine). Residues 2–229 (AAGTSSYWED…QRINLRKRRD (228 aa)) lie on the Cytoplasmic side of the membrane. Residues 9-30 (WEDLRKQARQLENELDLKLVSF) adopt a coiled-coil conformation. A disordered region spans residues 38 to 59 (SHSSTRDGRRDRYSSDTTPLLN). A compositionally biased stretch (basic and acidic residues) spans 41 to 51 (STRDGRRDRYS). Residues 68–95 (ETMAIEIEQLLARLTGVNDKMAEYTNSA) adopt a coiled-coil conformation. At S141 the chain carries Phosphoserine. Residues 230–250 (SLILGGVIGICTILLLLYAFH) form a helical; Anchor for type IV membrane protein membrane-spanning segment.

This sequence belongs to the GOSR1 family. Component of several multiprotein Golgi SNARE complexes. Identified in a SNARE complex with BET1, STX5 and YKT6, in a SNARE complex with BET1L, STX5 and YKT6, in a SNARE complex with STX5, GOSR2, SEC22B and BET1, and in complex with STX5 and COG3. Interacts with GABARAPL2.

Its subcellular location is the golgi apparatus membrane. In terms of biological role, involved in transport from the ER to the Golgi apparatus as well as in intra-Golgi transport. It belongs to a super-family of proteins called t-SNAREs or soluble NSF (N-ethylmaleimide-sensitive factor) attachment protein receptor. May play a protective role against hydrogen peroxide induced cytotoxicity under glutathione depleted conditions in neuronal cells by regulating the intracellular ROS levels via inhibition of p38 MAPK (MAPK11, MAPK12, MAPK13 and MAPK14). Participates in docking and fusion stage of ER to cis-Golgi transport. Plays an important physiological role in VLDL-transport vesicle-Golgi fusion and thus in VLDL delivery to the hepatic cis-Golgi. This chain is Golgi SNAP receptor complex member 1 (GOSR1), found in Homo sapiens (Human).